The primary structure comprises 1128 residues: Major DNA-binding protein (1128 aa).

Positions 1104 to 1128 (LGGGGQGSGGRRKRRLATVLPGLEV) are required for nuclear localization.

This sequence belongs to the herpesviridae major DNA-binding protein family. As to quaternary structure, homooligomers. Forms double-helical filaments necessary for the formation of replication compartments within the host nucleus. Interacts with the origin-binding protein. Interacts with the helicase primase complex; this interaction stimulates primer synthesis activity of the helicase-primase complex. Interacts with the DNA polymerase. Interacts with the alkaline exonuclease; this interaction increases its nuclease processivity.

The protein resides in the virion tegument. It is found in the host nucleus. Functionally, plays several crucial roles in viral infection. Participates in the opening of the viral DNA origin to initiate replication by interacting with the origin-binding protein. May disrupt loops, hairpins and other secondary structures present on ssDNA to reduce and eliminate pausing of viral DNA polymerase at specific sites during elongation. Promotes viral DNA recombination by performing strand-transfer, characterized by the ability to transfer a DNA strand from a linear duplex to a complementary single-stranded DNA circle. Can also catalyze the renaturation of complementary single strands. Additionally, reorganizes the host cell nucleus, leading to the formation of prereplicative sites and replication compartments. This process is driven by the protein which can form double-helical filaments in the absence of DNA. This chain is Major DNA-binding protein, found in Homo sapiens (Human).